Consider the following 96-residue polypeptide: Protein YdfX (96 aa).

The polypeptide is Protein YdfX (ydfX) (Escherichia coli (strain K12)).